Reading from the N-terminus, the 336-residue chain is Sulfate/thiosulfate import ATP-binding protein CysA (336 aa).

The ABC transporter domain maps to 3 to 233 (ITIENVSKSF…PASPFVMSFI (231 aa)). 35–42 (GPSGSGKS) contacts ATP.

Belongs to the ABC transporter superfamily. Sulfate/tungstate importer (TC 3.A.1.6) family. As to quaternary structure, the complex is composed of two ATP-binding proteins (CysA), two transmembrane proteins (CysT and CysW) and a solute-binding protein (CysP).

Its subcellular location is the cell inner membrane. The enzyme catalyses sulfate(out) + ATP + H2O = sulfate(in) + ADP + phosphate + H(+). The catalysed reaction is thiosulfate(out) + ATP + H2O = thiosulfate(in) + ADP + phosphate + H(+). Part of the ABC transporter complex CysAWTP involved in sulfate/thiosulfate import. Responsible for energy coupling to the transport system. This chain is Sulfate/thiosulfate import ATP-binding protein CysA, found in Thermosynechococcus vestitus (strain NIES-2133 / IAM M-273 / BP-1).